We begin with the raw amino-acid sequence, 241 residues long: Homeobox protein TGIF2LX (241 aa).

Disordered stretches follow at residues Met1–Pro58 and Lys125–Ser207. The span at Glu10–Asp39 shows a compositional bias: polar residues. A DNA-binding region (homeobox; TALE-type) is located at residues Glu48–Asp111.

It belongs to the TALE/TGIF homeobox family.

It localises to the nucleus. May have a transcription role in testis. The sequence is that of Homeobox protein TGIF2LX (TGIF2LX) from Pan troglodytes (Chimpanzee).